A 332-amino-acid chain; its full sequence is o-succinylbenzoate synthase (332 aa).

Lys135 acts as the Proton donor in catalysis. Mg(2+)-binding residues include Asp163, Glu192, and Asp215. Catalysis depends on Lys241, which acts as the Proton acceptor.

This sequence belongs to the mandelate racemase/muconate lactonizing enzyme family. MenC type 1 subfamily. It depends on a divalent metal cation as a cofactor.

It carries out the reaction (1R,6R)-6-hydroxy-2-succinyl-cyclohexa-2,4-diene-1-carboxylate = 2-succinylbenzoate + H2O. It functions in the pathway quinol/quinone metabolism; 1,4-dihydroxy-2-naphthoate biosynthesis; 1,4-dihydroxy-2-naphthoate from chorismate: step 4/7. Its pathway is quinol/quinone metabolism; menaquinone biosynthesis. Its function is as follows. Converts 2-succinyl-6-hydroxy-2,4-cyclohexadiene-1-carboxylate (SHCHC) to 2-succinylbenzoate (OSB). The chain is o-succinylbenzoate synthase from Vibrio cholerae serotype O1 (strain ATCC 39315 / El Tor Inaba N16961).